Consider the following 180-residue polypeptide: MVKESIPKEGENIKIQSYKHDGNIHRVWSETTILKGTDHVIIGGNDHTLVTESDGRTWITREPAIVYFHSEFWFNVICMFREDGIYYYCNLSSPFVCDEEALKYIDYDLDIKVYPNGKYHLLDEDEYEQHMNQMNYPHDIDVILRRNVDILQQWIEQKKGPFAPDFIKVWKERYKKIRNY.

The active-site Proton donor is the arginine 26. Positions 90, 106, 108, 110, 123, and 126 each coordinate Mg(2+).

Belongs to the Ntdp family. It depends on Mg(2+) as a cofactor.

The enzyme catalyses a ribonucleoside 5'-triphosphate + H2O = a ribonucleoside 5'-diphosphate + phosphate + H(+). The catalysed reaction is a ribonucleoside 5'-diphosphate + H2O = a ribonucleoside 5'-phosphate + phosphate + H(+). Has nucleoside phosphatase activity towards nucleoside triphosphates and nucleoside diphosphates. This chain is Nucleoside triphosphate/diphosphate phosphatase, found in Staphylococcus haemolyticus (strain JCSC1435).